Consider the following 282-residue polypeptide: Leucine-rich protein (282 aa).

Not essential for viability or growth. Nevertheless, uncontrolled production in E.coli is detrimental to the normal physiology of the bacteria. The chain is Leucine-rich protein (lrp) from Streptococcus dysgalactiae subsp. equisimilis (Streptococcus equisimilis).